The chain runs to 434 residues: Enolase (434 aa).

Residue glutamine 165 participates in (2R)-2-phosphoglycerate binding. Glutamate 207 acts as the Proton donor in catalysis. 3 residues coordinate Mg(2+): aspartate 244, glutamate 291, and aspartate 318. Positions 343, 372, 373, and 394 each coordinate (2R)-2-phosphoglycerate. Residue lysine 343 is the Proton acceptor of the active site.

The protein belongs to the enolase family. The cofactor is Mg(2+).

The protein resides in the cytoplasm. The protein localises to the secreted. It localises to the cell surface. It carries out the reaction (2R)-2-phosphoglycerate = phosphoenolpyruvate + H2O. It functions in the pathway carbohydrate degradation; glycolysis; pyruvate from D-glyceraldehyde 3-phosphate: step 4/5. Functionally, catalyzes the reversible conversion of 2-phosphoglycerate (2-PG) into phosphoenolpyruvate (PEP). It is essential for the degradation of carbohydrates via glycolysis. This chain is Enolase, found in Staphylococcus saprophyticus subsp. saprophyticus (strain ATCC 15305 / DSM 20229 / NCIMB 8711 / NCTC 7292 / S-41).